A 288-amino-acid chain; its full sequence is 4-diphosphocytidyl-2-C-methyl-D-erythritol kinase (288 aa).

K11 is a catalytic residue. 93–103 (PFGAGLGGGSS) is an ATP binding site. D135 is a catalytic residue.

Belongs to the GHMP kinase family. IspE subfamily.

The catalysed reaction is 4-CDP-2-C-methyl-D-erythritol + ATP = 4-CDP-2-C-methyl-D-erythritol 2-phosphate + ADP + H(+). The protein operates within isoprenoid biosynthesis; isopentenyl diphosphate biosynthesis via DXP pathway; isopentenyl diphosphate from 1-deoxy-D-xylulose 5-phosphate: step 3/6. Functionally, catalyzes the phosphorylation of the position 2 hydroxy group of 4-diphosphocytidyl-2C-methyl-D-erythritol. This Chlorobium limicola (strain DSM 245 / NBRC 103803 / 6330) protein is 4-diphosphocytidyl-2-C-methyl-D-erythritol kinase.